Reading from the N-terminus, the 304-residue chain is UDP-3-O-acyl-N-acetylglucosamine deacetylase (304 aa).

Zn(2+)-binding residues include H79, H238, and D242. The Proton donor role is filled by H265.

It belongs to the LpxC family. Requires Zn(2+) as cofactor.

It carries out the reaction a UDP-3-O-[(3R)-3-hydroxyacyl]-N-acetyl-alpha-D-glucosamine + H2O = a UDP-3-O-[(3R)-3-hydroxyacyl]-alpha-D-glucosamine + acetate. Its pathway is glycolipid biosynthesis; lipid IV(A) biosynthesis; lipid IV(A) from (3R)-3-hydroxytetradecanoyl-[acyl-carrier-protein] and UDP-N-acetyl-alpha-D-glucosamine: step 2/6. Its function is as follows. Catalyzes the hydrolysis of UDP-3-O-myristoyl-N-acetylglucosamine to form UDP-3-O-myristoylglucosamine and acetate, the committed step in lipid A biosynthesis. This is UDP-3-O-acyl-N-acetylglucosamine deacetylase from Laribacter hongkongensis (strain HLHK9).